Here is a 179-residue protein sequence, read N- to C-terminus: MDTTGASESSQPIRVNLKPDPLASFTQVIPPLALETTWTCPANSHAPTPSPLYGVKRLCALRATCGRADDLHAFLIGLGRRDKPSESPMYVDLQPFCSLLNSQRLLPEMANYNTLCDAPFSAATQQMMLESGQLGVHLAAIGYHCHCKSPFSAECWTGASEAYDHVVCGGKARAAVGGL.

The protein belongs to the alphaherpesvirinae HHV-1 UL55 family.

Its subcellular location is the virion tegument. The protein resides in the host nucleus matrix. This chain is Tegument protein UL55 homolog, found in Homo sapiens (Human).